The sequence spans 318 residues: 4-diphosphocytidyl-2-C-methyl-D-erythritol kinase (318 aa).

The active site involves lysine 25. 110 to 120 (PVAGGMAGGSA) is an ATP binding site. Aspartate 152 is an active-site residue.

Belongs to the GHMP kinase family. IspE subfamily.

The catalysed reaction is 4-CDP-2-C-methyl-D-erythritol + ATP = 4-CDP-2-C-methyl-D-erythritol 2-phosphate + ADP + H(+). It participates in isoprenoid biosynthesis; isopentenyl diphosphate biosynthesis via DXP pathway; isopentenyl diphosphate from 1-deoxy-D-xylulose 5-phosphate: step 3/6. Functionally, catalyzes the phosphorylation of the position 2 hydroxy group of 4-diphosphocytidyl-2C-methyl-D-erythritol. This is 4-diphosphocytidyl-2-C-methyl-D-erythritol kinase from Mycobacterium tuberculosis (strain ATCC 25177 / H37Ra).